The following is a 454-amino-acid chain: (Z)-3-hexen-1-ol acetyltransferase (454 aa).

Residues H174 and D389 each act as proton acceptor in the active site.

Belongs to the plant acyltransferase family. As to expression, expressed in leaves and stems. Lower levels in flowers and barely detected in roots and siliques.

The catalysed reaction is (3Z)-hex-3-en-1-ol + acetyl-CoA = (3Z)-hex-3-en-1-yl acetate + CoA. Inhibited by magnesium, calcium, cobalt, zinc and copper. In terms of biological role, acyltransferase involved in the production of green leaf volatiles (GLVs). Uses acetyl-CoA as substrate, but not malonyl-CoA or benzoyl-CoA. Prefers primary, medium-chain-length, aliphatic alcohols. This Arabidopsis thaliana (Mouse-ear cress) protein is (Z)-3-hexen-1-ol acetyltransferase (CHAT).